The chain runs to 119 residues: Putative arsenical resistance operon repressor ArsR2 (119 aa).

In terms of domain architecture, HTH arsR-type spans 24 to 119 (VDSDAMATDL…TLDDLRGNHE (96 aa)). The H-T-H motif DNA-binding region spans 60-83 (VCDLEATVGVSQSAVSQALSRLYT).

Transcriptional repressor for the arsR2M operon. In Halobacterium salinarum (strain ATCC 700922 / JCM 11081 / NRC-1) (Halobacterium halobium), this protein is Putative arsenical resistance operon repressor ArsR2 (arsR2).